We begin with the raw amino-acid sequence, 320 residues long: Ferrochelatase (320 aa).

Residues His194 and Glu275 each coordinate Fe cation.

The protein belongs to the ferrochelatase family. In terms of assembly, monomer.

It localises to the cytoplasm. The catalysed reaction is heme b + 2 H(+) = protoporphyrin IX + Fe(2+). Its pathway is porphyrin-containing compound metabolism; protoheme biosynthesis; protoheme from protoporphyrin-IX: step 1/1. Its function is as follows. Catalyzes the ferrous insertion into protoporphyrin IX. This chain is Ferrochelatase, found in Salmonella dublin (strain CT_02021853).